Here is a 423-residue protein sequence, read N- to C-terminus: Serine hydroxymethyltransferase (423 aa).

119–121 contributes to the (6S)-5,6,7,8-tetrahydrofolate binding site; it reads GHI. At K225 the chain carries N6-(pyridoxal phosphate)lysine.

This sequence belongs to the SHMT family. In terms of assembly, homodimer. Requires pyridoxal 5'-phosphate as cofactor.

The protein resides in the cytoplasm. It catalyses the reaction (6R)-5,10-methylene-5,6,7,8-tetrahydrofolate + glycine + H2O = (6S)-5,6,7,8-tetrahydrofolate + L-serine. Its pathway is one-carbon metabolism; tetrahydrofolate interconversion. It functions in the pathway amino-acid biosynthesis; glycine biosynthesis; glycine from L-serine: step 1/1. In terms of biological role, catalyzes the reversible interconversion of serine and glycine with tetrahydrofolate (THF) serving as the one-carbon carrier. Also exhibits THF-independent aldolase activity toward beta-hydroxyamino acids, producing glycine and aldehydes, via a retro-aldol mechanism. The protein is Serine hydroxymethyltransferase of Methanocella arvoryzae (strain DSM 22066 / NBRC 105507 / MRE50).